We begin with the raw amino-acid sequence, 226 residues long: V-type proton ATPase subunit E 1 (226 aa).

N-acetylalanine is present on alanine 2. At tyrosine 56 the chain carries Phosphotyrosine.

This sequence belongs to the V-ATPase E subunit family. In terms of assembly, V-ATPase is a heteromultimeric enzyme made up of two complexes: the ATP-hydrolytic V1 complex and the proton translocation V0 complex. The V1 complex consists of three catalytic AB heterodimers that form a heterohexamer, three peripheral stalks each consisting of EG heterodimers, one central rotor including subunits D and F, and the regulatory subunits C and H. The proton translocation complex V0 consists of the proton transport subunit a, a ring of proteolipid subunits c9c'', rotary subunit d, subunits e and f, and the accessory subunits ATP6AP1/Ac45 and ATP6AP2/PRR. Interacts with RABL2/RABL2A; binds preferentially to GTP-bound RABL2. Interacts with ALDOC. Interacts with RAB11B. As to expression, expressed within the midpiece of sperm tail (at protein level). Kidney; localizes to early distal nephron, encompassing thick ascending limbs and distal convoluted tubules (at protein level).

The protein localises to the apical cell membrane. Its subcellular location is the cytoplasmic vesicle. It localises to the secretory vesicle. It is found in the synaptic vesicle membrane. The protein resides in the clathrin-coated vesicle membrane. In terms of biological role, subunit of the V1 complex of vacuolar(H+)-ATPase (V-ATPase), a multisubunit enzyme composed of a peripheral complex (V1) that hydrolyzes ATP and a membrane integral complex (V0) that translocates protons. V-ATPase is responsible for acidifying and maintaining the pH of intracellular compartments and in some cell types, is targeted to the plasma membrane, where it is responsible for acidifying the extracellular environment. The sequence is that of V-type proton ATPase subunit E 1 (Atp6v1e1) from Mus musculus (Mouse).